Consider the following 366-residue polypeptide: Tyrosyl-DNA phosphodiesterase 2 (366 aa).

Met1 carries the post-translational modification N-acetylmethionine. Positions 1–22 (MASGSSSDAAESAEPAAAPAAA) are enriched in low complexity. A disordered region spans residues 1 to 30 (MASGSSSDAAESAEPAAAPAAAETEEDQVK). A Glycyl lysine isopeptide (Lys-Gly) (interchain with G-Cter in SUMO2) cross-link involves residue Lys30. Residue Thr95 is modified to Phosphothreonine; by ACVR1B. The interaction with 5' end of substrate DNA stretch occupies residues 126 to 130 (NIDGL). Mg(2+) contacts are provided by Asp128 and Glu158. The interaction with 5' end of substrate DNA stretch occupies residues 232–237 (HLESTR). Catalysis depends on Asp268, which acts as the Proton donor/acceptor. The interval 270-272 (NLR) is interaction with 5' end of substrate DNA.

This sequence belongs to the CCR4/nocturin family. As to quaternary structure, interacts with TRAF2, TRAF3, TRAF5, TRAF6, TNFRSF8/CD30, TNFRSF5/CD40, TNFRSF1B/TNF-R75, ETS1, ETS2, FLI1, SMAD3 and ACVR1B/ALK4. It depends on Mg(2+) as a cofactor. The cofactor is Mn(2+). Post-translationally, ubiquitinated by TRAF6.

It is found in the nucleus. It localises to the PML body. The protein resides in the nucleolus. The protein localises to the cytoplasm. DNA repair enzyme that can remove a variety of covalent adducts from DNA through hydrolysis of a 5'-phosphodiester bond, giving rise to DNA with a free 5' phosphate. Catalyzes the hydrolysis of dead-end complexes between DNA and the topoisomerase 2 (TOP2) active site tyrosine residue. The 5'-tyrosyl DNA phosphodiesterase activity can enable the repair of TOP2-induced DNA double-strand breaks/DSBs without the need for nuclease activity, creating a 'clean' DSB with 5'-phosphate termini that are ready for ligation. Thereby, protects the transcription of many genes involved in neurological development and maintenance from the abortive activity of TOP2. Hydrolyzes 5'-phosphoglycolates on protruding 5' ends on DSBs due to DNA damage by radiation and free radicals. Has preference for single-stranded DNA or duplex DNA with a 4 base pair overhang as substrate. Also has 3'-tyrosyl DNA phosphodiesterase activity, but less efficiently and much slower than TDP1. Constitutes the major if not only 5'-tyrosyl-DNA phosphodiesterase in cells. Also acts as an adapter by participating in the specific activation of MAP3K7/TAK1 in response to TGF-beta: associates with components of the TGF-beta receptor-TRAF6-TAK1 signaling module and promotes their ubiquitination dependent complex formation. Involved in non-canonical TGF-beta induced signaling routes. May also act as a negative regulator of ETS1 and may inhibit NF-kappa-B activation. Acts as a regulator of ribosome biogenesis following stress. This chain is Tyrosyl-DNA phosphodiesterase 2 (Tdp2), found in Rattus norvegicus (Rat).